A 115-amino-acid polypeptide reads, in one-letter code: UPF0342 protein Bsph_0375 (115 aa).

Belongs to the UPF0342 family.

This is UPF0342 protein Bsph_0375 from Lysinibacillus sphaericus (strain C3-41).